Consider the following 364-residue polypeptide: Probable UDP-arabinopyranose mutase 4 (364 aa).

A DXD motif motif is present at residues 106–108 (DDD). Arg-154 carries N-linked (Glc...) arginine glycosylation.

Belongs to the RGP family. In terms of assembly, heteromers with RGP1 and RGP2. It depends on Mn(2+) as a cofactor. Requires Mg(2+) as cofactor. Post-translationally, reversibly glycosylated in vitro by UDP-glucose, UDP-xylose and UDP-galactose, but not UDP-mannose. As to expression, specifically expressed in developing seeds.

The protein localises to the cytoplasm. The protein resides in the cytosol. It is found in the golgi apparatus. The catalysed reaction is UDP-beta-L-arabinofuranose = UDP-beta-L-arabinopyranose. Probable UDP-L-arabinose mutase involved in the biosynthesis of cell wall non-cellulosic polysaccharides. This Arabidopsis thaliana (Mouse-ear cress) protein is Probable UDP-arabinopyranose mutase 4.